Here is a 620-residue protein sequence, read N- to C-terminus: Chaperone protein HscA homolog (620 aa).

It belongs to the heat shock protein 70 family.

Its function is as follows. Chaperone involved in the maturation of iron-sulfur cluster-containing proteins. Has a low intrinsic ATPase activity which is markedly stimulated by HscB. The chain is Chaperone protein HscA homolog from Colwellia psychrerythraea (strain 34H / ATCC BAA-681) (Vibrio psychroerythus).